Consider the following 7158-residue polypeptide: Twitchin (7158 aa).

2 Ig-like domains span residues 5 to 97 (PRFT…INLN) and 111 to 204 (PSFV…LALN). 2 cysteine pairs are disulfide-bonded: Cys-25/Cys-81 and Cys-132/Cys-188. Disordered regions lie at residues 204-381 (NFEE…PIVL), 473-639 (EEEL…TKLR), 658-732 (KKVK…DSMA), and 763-955 (EVKE…IDMR). Positions 220-238 (TASPRPSSRGPGSRPSSPK) are enriched in low complexity. Composition is skewed to basic and acidic residues over residues 242–259 (KSRE…EGSP) and 279–291 (ESRR…KMEV). 2 stretches are compositionally biased toward low complexity: residues 319–340 (SPST…RKGS) and 347–368 (SGTT…ASSD). Residues 377 to 466 (PPIVLEASRS…GEGQSSAMVK (90 aa)) form the Ig-like 3 domain. Residues 504–513 (RVARRSKSKS) are compositionally biased toward basic residues. Low complexity predominate over residues 514-523 (KSPAPQAKKS). Composition is skewed to basic and acidic residues over residues 529–540 (GRQEASEVEHKR) and 601–618 (KTDS…DTLL). Positions 620–630 (KTTTSTKNESS) are enriched in low complexity. The stretch at 718 to 764 (VKSGAGGLEKSDSMASLKKLDLKKGKIDDNSDGAFKVQLKKVVKKEV) is one Kelch 1 repeat. Composition is skewed to basic and acidic residues over residues 763–813 (EVKE…DKPK), 837–850 (KEVE…ELKA), 885–897 (KAHD…EGIK), and 917–955 (SESR…IDMR). In terms of domain architecture, Ig-like 4 spans 980 to 1072 (PKIVEVPENV…DSADVKLLVT (93 aa)). The interval 1088–1118 (SQAGFQKDGEGGGAGGGGGEKKPMTEAERRQ) is disordered. Over residues 1106–1118 (GEKKPMTEAERRQ) the composition is skewed to basic and acidic residues. 3 Ig-like domains span residues 1122–1213 (PGKK…AQLT), 1217–1306 (PPMK…SKVQ), and 1312–1398 (PRHT…AQLI). Cys-1150 and Cys-1201 are joined by a disulfide. Fibronectin type-III domains lie at 1598–1690 (PKGP…AKNP), 1696–1791 (KPKN…MKAK), 1891–1988 (PPKG…IKDP), 1994–2087 (KPGR…AKPK), 2189–2282 (PNGP…AKNP), 2288–2383 (KTGT…AKPR), 2483–2576 (PLGP…AKNP), and 2579–2675 (VPGK…AKPR). The stretch at 2014–2058 (PPHKDGGAPIEEYIVEVRDPDTKEWKEVKRVPDTNASISGLKEGK) is one Kelch 2 repeat. An Ig-like 8 domain is found at 2086-2181 (PKFIPAWLKH…GADEEKANLT (96 aa)). One copy of the Kelch 3 repeat lies at 2207–2253 (WKPPDDDGGEPIEYYEVEKLDTATGRWVPCAKVKDTKAHIDGLKKGQ). Residues 2266–2287 (GASDALSTDKDTKAKNPYDEPG) show a composition bias toward basic and acidic residues. A disordered region spans residues 2266–2295 (GASDALSTDKDTKAKNPYDEPGKTGTPDVV). One copy of the Kelch 4 repeat lies at 2502–2547 (KVPEDDGGAPIDHYEIEKMDLATGRWVPCGRSETTKTTVPNLQPGH). The Ig-like 9 domain maps to 2679–2763 (PRIHREDLSD…TNINGTDSVT (85 aa)). 2 consecutive Fibronectin type-III domains span residues 2775–2868 (PKGP…AKNP) and 2874–2968 (RPGR…AKPR). The stretch at 2793-2839 (WKPPEDDGGEPIEFYEIEKMNTKDGIWVPCGRSGDTHFTVDSLNKGD) is one Kelch 5 repeat. The tract at residues 2849 to 2901 (NSEGPSDPLETETDILAKNPFDRPDRPGRPEPTDWDSDHVDLKWDPPLSDGGA) is disordered. The span at 2868 to 2892 (PFDRPDRPGRPEPTDWDSDHVDLKW) shows a compositional bias: basic and acidic residues. The Ig-like 10 domain occupies 2972–3062 (PHIDRDALKN…GEDEATVKIN (91 aa)). Fibronectin type-III domains are found at residues 3070–3165 (PNGP…AKDP) and 3171–3265 (KTNA…AKAR). The stretch at 3089 to 3134 (RAPDDDGGIPIENYVIEKYDTASGRWVPAAKVAGDKTTAVVDGLIP) is one Kelch 6 repeat. The Ig-like 11 domain occupies 3268–3358 (PPVIDRNSIQ…GTDTAEVKVT (91 aa)). Fibronectin type-III domains follow at residues 3365-3459 (SPRG…AKDP) and 3465-3559 (KPGT…AKPR). The stretch at 3384–3430 (WKEPEDDGGAEISHYVIEKQDAATGRWTACGESKDTNFHVDDLTQGH) is one Kelch 7 repeat. The Ig-like 12 domain maps to 3563–3653 (PKINRDMFVA…GKDEHEVDVN (91 aa)). Fibronectin type-III domains are found at residues 3661-3753 (PEGP…AKNP), 3759-3853 (APTD…AKPR), 3954-4047 (PEGP…AKNQ), 4053-4146 (PVDK…TKAR), 4246-4340 (PEGP…AKDP), and 4346-4440 (KPGR…TAKP). A Kelch 8 repeat occupies 3972–4018 (WKPPTDNGGTDVLHYIVEKMDTSRGTWQEVGTFPDCTAKVNKLVPGK). Kelch repeat units follow at residues 4265 to 4310 (KPPK…LTEG) and 4365 to 4410 (DPPR…RVQK). Residues 4445–4531 (PKFDLDLDGK…GEAEANIKIT (87 aa)) form the Ig-like 13 domain. Fibronectin type-III domains follow at residues 4538 to 4631 (APEN…IKDP), 4637 to 4733 (APST…CRPY), 4739 to 4834 (APDA…IEEQ), 4936 to 5028 (PTGP…AKNP), 5034 to 5129 (APGQ…ADNA), 5231 to 5326 (SPQH…VAKY), 5333 to 5427 (QPEA…LKSR), and 5430 to 5528 (PPGP…IQES). The stretch at 4557-4602 (DAPKDDGGAEIAGYKIEYQEVGSQIWDKVPGLISGTAYTVRGLEHG) is one Kelch 11 repeat. The Kelch 12 repeat unit spans residues 5287-5335 (LNYTVGGLIKDNRYRFRVRAETQYGVSEPCELADVVVAKYQFEVPNQPE). In terms of domain architecture, Ig-like 14 spans 5533-5621 (PQIVVKPEDT…GSDTATANLV (89 aa)). 2 consecutive Fibronectin type-III domains span residues 5723–5817 (PQGP…ARLP) and 5823–5919 (SPLN…ASGS). A Kelch 13 repeat occupies 5742–5787 (RPPVTDGGSKITSYVVEKRDLSKDEWVTVTSNVKDMNYIVTGLFEN). Ig-like domains follow at residues 5923-6011 (PKIV…ANLR) and 6016-6107 (PRVF…VNVT). Cys-5944 and Cys-5995 form a disulfide bridge. In terms of domain architecture, Fibronectin type-III 31 spans 6114–6207 (PPRFPIIENI…PTAPVLIPGD (94 aa)). One can recognise a Protein kinase domain in the interval 6261–6516 (YDIHEELGTG…IHQALEHPWL (256 aa)). ATP-binding positions include 6267 to 6275 (LGTGAFGVV) and Lys-6290. Asp-6382 acts as the Proton acceptor in catalysis. The segment at 6517-6581 (TPGNAPGRDS…SIRDAFWDRS (65 aa)) is C-terminal regulatory domain (CDR). 5 Ig-like domains span residues 6585 to 6673 (PRFI…VFLN), 6696 to 6795 (PRVE…CVLT), 6863 to 6952 (PSFT…ATLT), 6958 to 7059 (PLLN…ASLV), and 7067 to 7149 (PPVT…KAIA).

This sequence belongs to the protein kinase superfamily. CAMK Ser/Thr protein kinase family. In terms of assembly, may interact (via protein kinase and CRD domains) with mak-1 (via protein kinase domain). Requires Mg(2+) as cofactor. Phosphorylated by mak-1 on the protein kinase domain and/or CDR domain in vitro. As to expression, expressed in body wall, anal, vulval, and pharyngeal muscles (at protein level).

The protein localises to the cytoplasm. It is found in the myofibril. Its subcellular location is the sarcomere. The protein resides in the a band. The enzyme catalyses L-seryl-[protein] + ATP = O-phospho-L-seryl-[protein] + ADP + H(+). It catalyses the reaction L-threonyl-[protein] + ATP = O-phospho-L-threonyl-[protein] + ADP + H(+). Its activity is regulated as follows. Forces generated by the contraction/relaxation cycles of muscle activity separate the regulatory domain from the catalytic core, activating the enzyme. At rest, the kinase domain is in a closed conformation. The active site is occupied by the autoinhibitory region (CDR), which makes extensive contact with the catalytic site, blocking substrate binding. At low forces the regulatory tail will unravel reversibly and expose the active site to its substrates, potentially stabilized by binding of Ca/CALM. At high forces the kinase begins to unfold and the integrity of the active site is disrupted. Regulator of muscle contraction and relaxation. Senses mechanical strain that occurs during muscle activity by unfolding in clearly resolvable steps at differing forces. Plays a role in the organization of sarcomeres in body wall muscles. The polypeptide is Twitchin (Caenorhabditis elegans).